The chain runs to 268 residues: Zinc transporter ZupT (268 aa).

Transmembrane regions (helical) follow at residues 6-26 (LAFL…LIAF), 37-57 (SFAL…DIFF), 70-90 (TQGY…IGFI), 125-145 (GLFT…ATFV), and 152-172 (SIGL…GIAV). Residues Asn-136 and Glu-139 each contribute to the Fe(2+) site. Positions 139 and 164 each coordinate Zn(2+). Fe(2+)-binding residues include Asn-165, Glu-168, and Glu-197. Position 168 (Glu-168) interacts with Zn(2+). The next 2 membrane-spanning stretches (helical) occupy residues 201–221 (AIVA…GIIF) and 248–268 (MSMY…LLLA).

The protein belongs to the ZIP transporter (TC 2.A.5) family. ZupT subfamily.

The protein localises to the cell membrane. It catalyses the reaction Zn(2+)(in) = Zn(2+)(out). Functionally, mediates zinc uptake. May also transport other divalent cations. The sequence is that of Zinc transporter ZupT from Oceanobacillus iheyensis (strain DSM 14371 / CIP 107618 / JCM 11309 / KCTC 3954 / HTE831).